The following is a 35-amino-acid chain: Potassium channel toxin alpha-KTx 23.2 (35 aa).

3 disulfide bridges follow: Cys6–Cys26, Cys12–Cys31, and Cys16–Cys33.

Belongs to the short scorpion toxin superfamily. Potassium channel inhibitor family. Alpha-KTx 23 subfamily. As to expression, expressed by the venom gland.

Its subcellular location is the secreted. Selectively and irreversibly binds (K(d)=2.9 pM) and blocks Kv1.3/KCNA3 potassium channels of human T-lymphocytes. Weakly blocks Kv1.2/KCNA2 (9%). The protein is Potassium channel toxin alpha-KTx 23.2 of Vaejovis mexicanus smithi (Mexican scorpion).